Reading from the N-terminus, the 266-residue chain is GATA zinc finger domain-containing protein 1 (266 aa).

The GATA-type zinc finger occupies 9-33 (CSMCKTTSSSMWKKSPQGEILCHHC). Low complexity predominate over residues 59 to 72 (TTTFATTSAGPSQS). Positions 59–112 (TTTFATTSAGPSQSNGGGGGKQSKQEIHRRSARLRNTKYKSAPAAEKKVSTKGK) are disordered. K259 participates in a covalent cross-link: Glycyl lysine isopeptide (Lys-Gly) (interchain with G-Cter in SUMO2).

As to quaternary structure, component of a chromatin complex, at least composed of KDM5A, GATAD1 and EMSY. Expressed in the eye (lens, ciliary body, retina, sclera and conjunctiva) at postnatal day 2 and 10. Not detected anywhere at postnatal day 14.

The protein resides in the nucleus. Functionally, component of some chromatin complex recruited to chromatin sites methylated 'Lys-4' of histone H3 (H3K4me), with a preference for trimethylated form (H3K4me3). The protein is GATA zinc finger domain-containing protein 1 (Gatad1) of Mus musculus (Mouse).